The following is a 68-amino-acid chain: Conotoxin tx3b (68 aa).

An N-terminal signal peptide occupies residues 1–19; the sequence is MSKLGALLTICLLLFSLTA. A propeptide spanning residues 20–52 is cleaved from the precursor; sequence VPLDGDQHADQPAQRLQDRIPTEDHPLFDPNKR. Cystine bridges form between Cys53–Cys67, Cys54–Cys63, and Cys59–Cys66. Met61 carries the post-translational modification Methionine sulfoxide; partial. Cys67 bears the Cysteine amide mark.

In terms of tissue distribution, expressed by the venom duct.

It localises to the secreted. In terms of biological role, intracranial injection into mice causes scratching, hyperactivity and circular motion. The protein is Conotoxin tx3b of Conus textile (Cloth-of-gold cone).